The sequence spans 1038 residues: Isoleucine--tRNA ligase (1038 aa).

The short motif at 48 to 58 is the 'HIGH' region element; sequence PTANGKPHVGH. Positions 590-594 match the 'KMSKS' region motif; sequence KMSKS. K593 is an ATP binding site.

It belongs to the class-I aminoacyl-tRNA synthetase family. IleS type 2 subfamily. Monomer. It depends on Zn(2+) as a cofactor.

Its subcellular location is the cytoplasm. The enzyme catalyses tRNA(Ile) + L-isoleucine + ATP = L-isoleucyl-tRNA(Ile) + AMP + diphosphate. Functionally, catalyzes the attachment of isoleucine to tRNA(Ile). As IleRS can inadvertently accommodate and process structurally similar amino acids such as valine, to avoid such errors it has two additional distinct tRNA(Ile)-dependent editing activities. One activity is designated as 'pretransfer' editing and involves the hydrolysis of activated Val-AMP. The other activity is designated 'posttransfer' editing and involves deacylation of mischarged Val-tRNA(Ile). The sequence is that of Isoleucine--tRNA ligase from Clostridium novyi (strain NT).